We begin with the raw amino-acid sequence, 341 residues long: Methionine import ATP-binding protein MetN 1 (341 aa).

An ABC transporter domain is found at 2 to 241 (IEFKNVNKVF…PQTNTAKNFV (240 aa)). 38-45 (GYSGAGKS) contributes to the ATP binding site.

It belongs to the ABC transporter superfamily. Methionine importer (TC 3.A.1.24) family. In terms of assembly, the complex is composed of two ATP-binding proteins (MetN), two transmembrane proteins (MetI) and a solute-binding protein (MetQ).

The protein resides in the cell membrane. It carries out the reaction L-methionine(out) + ATP + H2O = L-methionine(in) + ADP + phosphate + H(+). The catalysed reaction is D-methionine(out) + ATP + H2O = D-methionine(in) + ADP + phosphate + H(+). Part of the ABC transporter complex MetNIQ involved in methionine import. Responsible for energy coupling to the transport system. This is Methionine import ATP-binding protein MetN 1 from Staphylococcus epidermidis (strain ATCC 35984 / DSM 28319 / BCRC 17069 / CCUG 31568 / BM 3577 / RP62A).